A 285-amino-acid chain; its full sequence is Pantothenate synthetase (285 aa).

ATP is bound at residue 30–37 (MGFLHEGH). Catalysis depends on His-37, which acts as the Proton donor. A (R)-pantoate-binding site is contributed by Gln-61. Gln-61 serves as a coordination point for beta-alanine. An ATP-binding site is contributed by 147–150 (GQKD). Gln-153 is a binding site for (R)-pantoate. ATP-binding positions include Val-176 and 184–187 (KSSR).

It belongs to the pantothenate synthetase family. In terms of assembly, homodimer.

Its subcellular location is the cytoplasm. The enzyme catalyses (R)-pantoate + beta-alanine + ATP = (R)-pantothenate + AMP + diphosphate + H(+). It participates in cofactor biosynthesis; (R)-pantothenate biosynthesis; (R)-pantothenate from (R)-pantoate and beta-alanine: step 1/1. Functionally, catalyzes the condensation of pantoate with beta-alanine in an ATP-dependent reaction via a pantoyl-adenylate intermediate. The sequence is that of Pantothenate synthetase from Listeria monocytogenes serotype 4b (strain F2365).